Here is a 422-residue protein sequence, read N- to C-terminus: Serine--tRNA ligase (422 aa).

229–231 provides a ligand contact to L-serine; that stretch reads TAE. 260–262 provides a ligand contact to ATP; the sequence is RRE. An L-serine-binding site is contributed by Glu283. 347 to 350 serves as a coordination point for ATP; that stretch reads EISS. Residue Ser383 participates in L-serine binding.

It belongs to the class-II aminoacyl-tRNA synthetase family. Type-1 seryl-tRNA synthetase subfamily. As to quaternary structure, homodimer. The tRNA molecule binds across the dimer.

It localises to the cytoplasm. It carries out the reaction tRNA(Ser) + L-serine + ATP = L-seryl-tRNA(Ser) + AMP + diphosphate + H(+). The catalysed reaction is tRNA(Sec) + L-serine + ATP = L-seryl-tRNA(Sec) + AMP + diphosphate + H(+). It functions in the pathway aminoacyl-tRNA biosynthesis; selenocysteinyl-tRNA(Sec) biosynthesis; L-seryl-tRNA(Sec) from L-serine and tRNA(Sec): step 1/1. Functionally, catalyzes the attachment of serine to tRNA(Ser). Is also able to aminoacylate tRNA(Sec) with serine, to form the misacylated tRNA L-seryl-tRNA(Sec), which will be further converted into selenocysteinyl-tRNA(Sec). The sequence is that of Serine--tRNA ligase from Pelobacter propionicus (strain DSM 2379 / NBRC 103807 / OttBd1).